Here is a 165-residue protein sequence, read N- to C-terminus: Large ribosomal subunit protein uL10 (165 aa).

Belongs to the universal ribosomal protein uL10 family. Part of the ribosomal stalk of the 50S ribosomal subunit. The N-terminus interacts with L11 and the large rRNA to form the base of the stalk. The C-terminus forms an elongated spine to which L12 dimers bind in a sequential fashion forming a multimeric L10(L12)X complex.

Functionally, forms part of the ribosomal stalk, playing a central role in the interaction of the ribosome with GTP-bound translation factors. The polypeptide is Large ribosomal subunit protein uL10 (Shewanella halifaxensis (strain HAW-EB4)).